We begin with the raw amino-acid sequence, 217 residues long: MTALSESALMVRAALEERGLETPMTSKVVSREEKKEKIEYHMREILELLSLDLTDDSLMETPHRIAKMYVDEVFSGLDYANFPKITVIENKMKCDEMVRVKGITLTSTCEHHLVTIDGKATVAYIPRGKIIGLSKINRIVRFFAQRPQVQERMTQQILVALQTLLESDDVAVTIDATHYCVKARGVMDATSETTTTALGGIFKRIPATRAEFFHGIR.

Residues Cys-109, His-112, and Cys-180 each contribute to the Zn(2+) site.

Belongs to the GTP cyclohydrolase I family. As to quaternary structure, toroid-shaped homodecamer, composed of two pentamers of five dimers.

The enzyme catalyses GTP + H2O = 7,8-dihydroneopterin 3'-triphosphate + formate + H(+). Its pathway is cofactor biosynthesis; 7,8-dihydroneopterin triphosphate biosynthesis; 7,8-dihydroneopterin triphosphate from GTP: step 1/1. This chain is GTP cyclohydrolase 1, found in Photobacterium profundum (strain SS9).